The primary structure comprises 313 residues: Ribosomal RNA small subunit methyltransferase H (313 aa).

S-adenosyl-L-methionine contacts are provided by residues 31–33, D51, F77, D95, and Q102; that span reads GGH.

Belongs to the methyltransferase superfamily. RsmH family.

The protein localises to the cytoplasm. The catalysed reaction is cytidine(1402) in 16S rRNA + S-adenosyl-L-methionine = N(4)-methylcytidine(1402) in 16S rRNA + S-adenosyl-L-homocysteine + H(+). Functionally, specifically methylates the N4 position of cytidine in position 1402 (C1402) of 16S rRNA. This is Ribosomal RNA small subunit methyltransferase H from Xylella fastidiosa (strain M23).